Reading from the N-terminus, the 246-residue chain is ATP synthase subunit a (246 aa).

Residues 1 to 3 (MFY) constitute a propeptide, removed in mature form. A run of 7 helical transmembrane segments spans residues 21-41 (LTFSITNYTLYLIIVSLIIIF), 56-76 (WGVSVIAIYDTILNLVNGQIG), 82-102 (YFPLIFTIFNFILIANLISMI), 113-133 (VAVVSFSLTLWIGNVVLGLYL), 138-158 (FFALFVPSGTPLALVPVLVLI), 184-204 (LMLILGSLIISLMSSSFLGFV), and 206-226 (GIIPILAVVAITILEFGIAII).

This sequence belongs to the ATPase A chain family. In terms of assembly, F-type ATPases have 2 components, CF(1) - the catalytic core - and CF(0) - the membrane proton channel. CF(1) has five subunits: alpha(3), beta(3), gamma(1), delta(1), epsilon(1). CF(0) has three main subunits: a, b and c.

It is found in the mitochondrion inner membrane. Its function is as follows. Mitochondrial membrane ATP synthase (F(1)F(0) ATP synthase or Complex V) produces ATP from ADP in the presence of a proton gradient across the membrane which is generated by electron transport complexes of the respiratory chain. F-type ATPases consist of two structural domains, F(1) - containing the extramembraneous catalytic core and F(0) - containing the membrane proton channel, linked together by a central stalk and a peripheral stalk. During catalysis, ATP synthesis in the catalytic domain of F(1) is coupled via a rotary mechanism of the central stalk subunits to proton translocation. Key component of the proton channel; it may play a direct role in the translocation of protons across the membrane. This Candida parapsilosis (Yeast) protein is ATP synthase subunit a (ATP6).